The primary structure comprises 483 residues: Regulatory protein ViaA (483 aa).

Belongs to the ViaA family. In terms of assembly, homodimer. Interacts with RavA.

It localises to the cytoplasm. In terms of biological role, component of the RavA-ViaA chaperone complex, which may act on the membrane to optimize the function of some of the respiratory chains. ViaA stimulates the ATPase activity of RavA. The protein is Regulatory protein ViaA of Salmonella paratyphi A (strain ATCC 9150 / SARB42).